The chain runs to 201 residues: Pyrrolidone-carboxylate peptidase (201 aa).

Active-site residues include Glu78, Cys141, and His165.

The protein belongs to the peptidase C15 family. Homotetramer.

The protein resides in the cytoplasm. The enzyme catalyses Release of an N-terminal pyroglutamyl group from a polypeptide, the second amino acid generally not being Pro.. Its function is as follows. Removes 5-oxoproline from various penultimate amino acid residues except L-proline. The protein is Pyrrolidone-carboxylate peptidase of Brachyspira hyodysenteriae (strain ATCC 49526 / WA1).